Here is a 308-residue protein sequence, read N- to C-terminus: Glutamyl-Q tRNA(Asp) synthetase (308 aa).

Residues 19–23 and Glu55 each bind L-glutamate; that span reads RFAPS. Positions 22-32 match the 'HIGH' region motif; it reads PSPSGELHFGS. Positions 111, 113, 125, and 129 each coordinate Zn(2+). L-glutamate is bound by residues Tyr182 and Arg200. Positions 238–242 match the 'KMSKS' region motif; it reads KLSKQ. Lys241 contributes to the ATP binding site.

The protein belongs to the class-I aminoacyl-tRNA synthetase family. GluQ subfamily. Zn(2+) is required as a cofactor.

In terms of biological role, catalyzes the tRNA-independent activation of glutamate in presence of ATP and the subsequent transfer of glutamate onto a tRNA(Asp). Glutamate is transferred on the 2-amino-5-(4,5-dihydroxy-2-cyclopenten-1-yl) moiety of the queuosine in the wobble position of the QUC anticodon. This chain is Glutamyl-Q tRNA(Asp) synthetase, found in Shigella flexneri.